Here is a 410-residue protein sequence, read N- to C-terminus: Scarecrow-like protein 32 (410 aa).

In terms of domain architecture, GRAS spans 18–408 (LRGCGDANFM…HSVVFATVWV (391 aa)). The tract at residues 25 to 88 (NFMEQLLLHC…AVSKTPTLSS (64 aa)) is leucine repeat I (LRI). The segment at 107–188 (LAAFVDLTPW…HFPPFINISY (82 aa)) is VHIID. Positions 138-142 (VHIVD) match the VHIID motif. A leucine repeat II (LRII) region spans residues 190 to 227 (ELGSKLVNFATTRNITMEFTIVPSTYSDGFSSLLQQLR). Positions 237–329 (LVVNCHMMLR…EAEISWKIEN (93 aa)) are PFYRE. Positions 332-408 (AKEGAERVER…HSVVFATVWV (77 aa)) are SAW.

This sequence belongs to the GRAS family. In terms of tissue distribution, expressed in seedlings, leaves and flowers.

It localises to the nucleus. Functionally, probable transcription factor involved in plant development. This Arabidopsis thaliana (Mouse-ear cress) protein is Scarecrow-like protein 32 (SCL32).